Consider the following 611-residue polypeptide: MSKVIGIDLGTTNSCVAVLEGDEPKVIQNPEGARTTPSVVAFKNGETQVGEVAKRQAITNPNTVQSIKRHMGTDYKVDIEGKSYTPQEISAMVLQNLKNTAESYLGDKVDKAVITVPAYFNDAERQATKDAGKIAGLEVERIINEPTAAALAYGLDKTDQDQKVLVFDLGGGTFDVSILELGDGVFEVLSTAGDNKLGGDDFDQVIIDYLVSEFKKENGVDLSQDKMALQRLKDAAEKAKKDLSGVSQTQISLPFISAGESGPLHLEISLTRSKFEELADSLIRRTMEPTRQALKDAGLSTSEIDEVILVGGSTRIPAVQEAVKKEIGKDPHKGVNPDEVVAMGAAIQGGVITGDVKDVVLLDVTPLSLGIEIMGGRMNTLIERNTTIPTSKSQVYSTAADNQPAVDIHVLQGERPMASDNKTLGRFQLTDIPPAPRGVPQIEVTFDIDKNGIVNVTAKDLGTNKEQNITIQSSSALSDEEIDRMVKDAEENAEADKKRREEVDLRNEADSLVFQVEKTITDLGDNISEEDKSNAESKKDALKSALEGQDIEDIKAKKEELEKVIQDLSAKVYQQAQQAQQQAQDGAQQTQNDSNVEDAEFKEVNDDEDKK.

T173 is modified (phosphothreonine; by autocatalysis). Disordered regions lie at residues 525-548 (DNISEEDKSNAESKKDALKSALEG) and 573-611 (YQQAQQAQQQAQDGAQQTQNDSNVEDAEFKEVNDDEDKK). The segment covering 529-542 (EEDKSNAESKKDAL) has biased composition (basic and acidic residues). A compositionally biased stretch (low complexity) spans 574-591 (QQAQQAQQQAQDGAQQTQ). Over residues 599–611 (AEFKEVNDDEDKK) the composition is skewed to basic and acidic residues.

It belongs to the heat shock protein 70 family.

In terms of biological role, acts as a chaperone. This Staphylococcus haemolyticus (strain JCSC1435) protein is Chaperone protein DnaK.